We begin with the raw amino-acid sequence, 453 residues long: Tubulin gamma chain (453 aa).

Position 142 to 148 (alanine 142 to glycine 148) interacts with GTP.

It belongs to the tubulin family.

Its subcellular location is the cytoplasm. It localises to the cytoskeleton. The protein localises to the microtubule organizing center. It is found in the spindle pole body. Tubulin is the major constituent of microtubules. The gamma chain is found at microtubule organizing centers (MTOC) such as the spindle poles or the centrosome, suggesting that it is involved in the minus-end nucleation of microtubule assembly. This chain is Tubulin gamma chain (TUB4), found in Coprinopsis cinerea (strain Okayama-7 / 130 / ATCC MYA-4618 / FGSC 9003) (Inky cap fungus).